The primary structure comprises 253 residues: Ditrans,polycis-undecaprenyl-diphosphate synthase ((2E,6E)-farnesyl-diphosphate specific) (253 aa).

Residue Asp-26 is part of the active site. Residue Asp-26 coordinates Mg(2+). Substrate-binding positions include 27–30 (GNGR), Trp-31, Arg-39, His-43, and 71–73 (SSE). Asn-74 (proton acceptor) is an active-site residue. Residues Trp-75, Arg-77, and Arg-194 each coordinate substrate. Position 199 (His-199) interacts with Mg(2+). A substrate-binding site is contributed by 200–202 (RIS). Glu-213 contributes to the Mg(2+) binding site.

It belongs to the UPP synthase family. As to quaternary structure, homodimer. Mg(2+) serves as cofactor.

It carries out the reaction 8 isopentenyl diphosphate + (2E,6E)-farnesyl diphosphate = di-trans,octa-cis-undecaprenyl diphosphate + 8 diphosphate. Its function is as follows. Catalyzes the sequential condensation of isopentenyl diphosphate (IPP) with (2E,6E)-farnesyl diphosphate (E,E-FPP) to yield (2Z,6Z,10Z,14Z,18Z,22Z,26Z,30Z,34E,38E)-undecaprenyl diphosphate (di-trans,octa-cis-UPP). UPP is the precursor of glycosyl carrier lipid in the biosynthesis of bacterial cell wall polysaccharide components such as peptidoglycan and lipopolysaccharide. The polypeptide is Ditrans,polycis-undecaprenyl-diphosphate synthase ((2E,6E)-farnesyl-diphosphate specific) (Shigella flexneri).